A 770-amino-acid chain; its full sequence is ATP-dependent RNA helicase mak5 (770 aa).

The segment covering 1–10 (MGQKRQRDQK) has biased composition (basic and acidic residues). Disordered stretches follow at residues 1–33 (MGQKRQRDQKGPTLHVRKRKRTGKPTNVAERES) and 78–174 (NGQL…AKDR). Over residues 105–118 (TEFDDEWNGFSDED) the composition is skewed to acidic residues. 2 stretches are compositionally biased toward basic and acidic residues: residues 138 to 154 (NGKKGKDAKNKKDIKAK) and 162 to 174 (EQKEKDGAQAKDR). The Q motif signature appears at 197-225 (SAWEPLGLSPETLTSLSKLKFSTPTSVQK). The Helicase ATP-binding domain maps to 228–437 (IPPILDGHDV…AGKGKWTGGD (210 aa)). Residue 241–248 (ASTGSGKT) participates in ATP binding. Positions 363–366 (DEAD) match the DEAD box motif. The tract at residues 384–404 (LDRVEDGGPPDEEDDSSEENV) is disordered. Residues 391 to 401 (GPPDEEDDSSE) are compositionally biased toward acidic residues. Residues 489–639 (YLYTLLLYHP…KLPLESLELD (151 aa)) enclose the Helicase C-terminal domain. Residues 693–713 (KGWGRGRGRGRQERDRQVGST) form a disordered region.

Belongs to the DEAD box helicase family. DDX24/MAK5 subfamily.

The protein localises to the nucleus. It localises to the nucleolus. It catalyses the reaction ATP + H2O = ADP + phosphate + H(+). In terms of biological role, ATP-binding RNA helicase involved in the biogenesis of 60S ribosomal subunits and is required for the normal formation of 25S and 5.8S rRNAs. This chain is ATP-dependent RNA helicase mak5 (mak5), found in Emericella nidulans (strain FGSC A4 / ATCC 38163 / CBS 112.46 / NRRL 194 / M139) (Aspergillus nidulans).